The primary structure comprises 286 residues: Nucleoid occlusion protein (286 aa).

The H-T-H motif DNA-binding region spans Glu147 to Leu166.

Belongs to the ParB family.

It localises to the cytoplasm. It is found in the nucleoid. Its function is as follows. Effects nucleoid occlusion by binding relatively nonspecifically to DNA and preventing the assembly of the division machinery in the vicinity of the nucleoid, especially under conditions that disturb the cell cycle. It helps to coordinate cell division and chromosome segregation by preventing the formation of the Z ring through the nucleoid, which would cause chromosome breakage. This is Nucleoid occlusion protein from Oceanobacillus iheyensis (strain DSM 14371 / CIP 107618 / JCM 11309 / KCTC 3954 / HTE831).